A 246-amino-acid polypeptide reads, in one-letter code: Myogenic factor 5 (246 aa).

The tract at residues 1 to 38 (RVRARIPGLSSPEGEFPEDFEPRELPPFGAPAPTEPAC) is disordered. The bHLH domain maps to 73-124 (DRRKAATMRERRRLKKVNQAFETLKRCTTANPNQRLPKVEILRNAIRYIESL). Residues 210-246 (EEPGLPLRHAGSLSPGASIDSGARTPGSPPPRTYQAL) form a disordered region. Over residues 236–246 (GSPPPRTYQAL) the composition is skewed to pro residues.

In terms of assembly, efficient DNA binding requires dimerization with another bHLH protein.

It localises to the nucleus. Functionally, acts as a transcriptional activator that promotes transcription of muscle-specific target genes and plays a role in muscle differentiation. Induces fibroblasts to differentiate into myoblasts. Probable sequence specific DNA-binding protein. The polypeptide is Myogenic factor 5 (MYF5) (Coturnix japonica (Japanese quail)).